Reading from the N-terminus, the 237-residue chain is tRNA (guanine-N(7)-)-methyltransferase (237 aa).

Asp35, Glu60, Asn87, and Asp113 together coordinate S-adenosyl-L-methionine. Asp113 is an active-site residue. 2 residues coordinate substrate: Lys117 and Asp149.

The protein belongs to the class I-like SAM-binding methyltransferase superfamily. TrmB family.

The enzyme catalyses guanosine(46) in tRNA + S-adenosyl-L-methionine = N(7)-methylguanosine(46) in tRNA + S-adenosyl-L-homocysteine. The protein operates within tRNA modification; N(7)-methylguanine-tRNA biosynthesis. Functionally, catalyzes the formation of N(7)-methylguanine at position 46 (m7G46) in tRNA. This Synechococcus sp. (strain WH7803) protein is tRNA (guanine-N(7)-)-methyltransferase.